A 223-amino-acid polypeptide reads, in one-letter code: Cytidylate kinase (223 aa).

10-18 (GPASSGKST) serves as a coordination point for ATP.

This sequence belongs to the cytidylate kinase family. Type 1 subfamily.

Its subcellular location is the cytoplasm. It carries out the reaction CMP + ATP = CDP + ADP. The enzyme catalyses dCMP + ATP = dCDP + ADP. The chain is Cytidylate kinase from Streptococcus pneumoniae serotype 4 (strain ATCC BAA-334 / TIGR4).